The following is a 338-amino-acid chain: Probable tRNA pseudouridine synthase B (338 aa).

The active-site Nucleophile is the aspartate 80. In terms of domain architecture, PUA spans 247-322; it reads LPRIEIRDTA…IMVDTKRVLM (76 aa).

This sequence belongs to the pseudouridine synthase TruB family. Type 2 subfamily.

The catalysed reaction is uridine(55) in tRNA = pseudouridine(55) in tRNA. Could be responsible for synthesis of pseudouridine from uracil-55 in the psi GC loop of transfer RNAs. This Methanopyrus kandleri (strain AV19 / DSM 6324 / JCM 9639 / NBRC 100938) protein is Probable tRNA pseudouridine synthase B.